The chain runs to 158 residues: Transcriptional regulatory protein DoeX (158 aa).

One can recognise an HTH asnC-type domain in the interval 3-64 (LDRYDLKILE…RLNTDVLVKR (62 aa)). Positions 22 to 41 (KSKLAEAINLSVSPCWERVR) form a DNA-binding region, H-T-H motif.

It localises to the cytoplasm. Its function is as follows. Acts as a transcriptional regulator. It binds DNA specifically to a fragment from the doeA promoter region. In Halomonas elongata (strain ATCC 33173 / DSM 2581 / NBRC 15536 / NCIMB 2198 / 1H9), this protein is Transcriptional regulatory protein DoeX (doeX).